The chain runs to 65 residues: MPKMKTKKAAAKRFKATGTGKLKRGKAFRSHILTKKSTKTKRNLRKGGYVSETQEKTMKTLLPYL.

It belongs to the bacterial ribosomal protein bL35 family.

The sequence is that of Large ribosomal subunit protein bL35 from Clostridium acetobutylicum (strain ATCC 824 / DSM 792 / JCM 1419 / IAM 19013 / LMG 5710 / NBRC 13948 / NRRL B-527 / VKM B-1787 / 2291 / W).